We begin with the raw amino-acid sequence, 295 residues long: MDAAPMIHGTTVWPSPAKLNLFLYITGRRANGYHDLQTLFQFLDHGDELTITANNSGNITLSPALADVALEDNLIYKAAMALKNAAQSPLGADIQLHKVLPMGGGIGGGSSNAATTLVALNYLWQTGLSDDQLAEIGLALGADVPVFTRGFAAFAEGVGEELSAVEPEEKWYLVVRPAVSIATKDIFTHPQLMRNTPKRDLASLLTTPYENDCEKIVRSLYPEVDKQLSWLLQYAPSRLTGTGSCVFAEFSSRKDAQAVFAQLSDNVLAFVAQGRNVSPLRKTLADYQSAKIRPY.

Residue K18 is part of the active site. 101–111 is a binding site for ATP; the sequence is PMGGGIGGGSS. D143 is a catalytic residue.

Belongs to the GHMP kinase family. IspE subfamily.

It catalyses the reaction 4-CDP-2-C-methyl-D-erythritol + ATP = 4-CDP-2-C-methyl-D-erythritol 2-phosphate + ADP + H(+). The protein operates within isoprenoid biosynthesis; isopentenyl diphosphate biosynthesis via DXP pathway; isopentenyl diphosphate from 1-deoxy-D-xylulose 5-phosphate: step 3/6. Catalyzes the phosphorylation of the position 2 hydroxy group of 4-diphosphocytidyl-2C-methyl-D-erythritol. This chain is 4-diphosphocytidyl-2-C-methyl-D-erythritol kinase, found in Vibrio cholerae serotype O1 (strain ATCC 39315 / El Tor Inaba N16961).